The primary structure comprises 205 residues: Methylthioribulose-1-phosphate dehydratase (205 aa).

Residue cysteine 75 participates in substrate binding. The Zn(2+) site is built by histidine 93 and histidine 95. Glutamate 116 functions as the Proton donor/acceptor in the catalytic mechanism. Histidine 171 serves as a coordination point for Zn(2+).

Belongs to the aldolase class II family. MtnB subfamily. The cofactor is Zn(2+).

It localises to the cytoplasm. The enzyme catalyses 5-(methylsulfanyl)-D-ribulose 1-phosphate = 5-methylsulfanyl-2,3-dioxopentyl phosphate + H2O. It participates in amino-acid biosynthesis; L-methionine biosynthesis via salvage pathway; L-methionine from S-methyl-5-thio-alpha-D-ribose 1-phosphate: step 2/6. Functionally, catalyzes the dehydration of methylthioribulose-1-phosphate (MTRu-1-P) into 2,3-diketo-5-methylthiopentyl-1-phosphate (DK-MTP-1-P). The chain is Methylthioribulose-1-phosphate dehydratase from Kluyveromyces lactis (strain ATCC 8585 / CBS 2359 / DSM 70799 / NBRC 1267 / NRRL Y-1140 / WM37) (Yeast).